We begin with the raw amino-acid sequence, 127 residues long: Glycine cleavage system H protein 1 (127 aa).

A Lipoyl-binding domain is found at 20–101; sequence SVTVGITAYA…MGEGWFFRFI (82 aa). Lysine 60 bears the N6-lipoyllysine mark.

The protein belongs to the GcvH family. As to quaternary structure, the glycine cleavage system is composed of four proteins: P, T, L and H. (R)-lipoate serves as cofactor.

Functionally, the glycine cleavage system catalyzes the degradation of glycine. The H protein shuttles the methylamine group of glycine from the P protein to the T protein. The sequence is that of Glycine cleavage system H protein 1 from Pseudomonas putida (strain ATCC 47054 / DSM 6125 / CFBP 8728 / NCIMB 11950 / KT2440).